Here is a 2021-residue protein sequence, read N- to C-terminus: HEAT repeat-containing protein 5A (2021 aa).

HEAT repeat units follow at residues Ser795 to Ser836 and Val1059 to Ala1096. 2 disordered regions span residues Glu1503–Asp1528 and Arg1989–Pro2012. Residues Val1512–Gly1522 show a composition bias toward polar residues.

The protein belongs to the HEATR5 family.

This Xenopus tropicalis (Western clawed frog) protein is HEAT repeat-containing protein 5A (heatr5a).